The following is a 499-amino-acid chain: Probable cytochrome P450 cyp-35D1 (499 aa).

Cys444 is a heme binding site.

It belongs to the cytochrome P450 family. Heme is required as a cofactor. Expressed in hypodermis, intestine and vulva upon thiabendazole (TBZ) exposure.

Its function is as follows. Cytochromes P450 are a group of heme-thiolate monooxygenases. They oxidize a variety of structurally unrelated compounds, including steroids, fatty acids, and xenobiotics. Involved in the oxidative metabolism of thiabendazole (TBZ). Catalyzes the conversion of TBZ to its hydroxylated form. The polypeptide is Probable cytochrome P450 cyp-35D1 (Caenorhabditis elegans).